We begin with the raw amino-acid sequence, 368 residues long: snRNA-activating protein complex subunit 1 (368 aa).

An SNAPC3-binding region spans residues 1–168; sequence MGTPPGLQTD…EEFKDPSDRV (168 aa). Residues 164–268 are SNAPC4-binding; sequence PSDRVMKLIT…AESLAKIKSK (105 aa). Disordered regions lie at residues 224-257 and 275-368; these read QQWH…ERCE and QASK…RRKH. Over residues 238–257 the composition is skewed to basic and acidic residues; it reads KTNDGEEKMEGNSQETERCE. A phosphoserine mark is found at Ser289 and Ser290.

In terms of assembly, part of the SNAPc complex composed of 5 subunits: SNAPC1, SNAPC2, SNAPC3, SNAPC4 and SNAPC5. SNAPC1 interacts with SNAPC3, SNAPC4 and TBP.

The protein localises to the nucleus. Part of the SNAPc complex required for the transcription of both RNA polymerase II and III small-nuclear RNA genes. Binds to the proximal sequence element (PSE), a non-TATA-box basal promoter element common to these 2 types of genes. Recruits TBP and BRF2 to the U6 snRNA TATA box. In Homo sapiens (Human), this protein is snRNA-activating protein complex subunit 1 (SNAPC1).